Consider the following 205-residue polypeptide: MATPLGWSKAGSGSVCLAFDQLRDVIESQEELIHQLRNVMVLQDENFVSKEEFQAVEKKLVEEKAAHAKTKVLLAKEEEKLQFALGEVEVLSKQLEKEKLAFEKALSSVKSKVLQESSKKDQLITKCNEIESHIIKQEDILNGKENEIKELQQVISQQKQIFRNHMSDFRIQKQQESYMAQVLDQKHKKASGTRQAHSHQHPREK.

Residues 17–166 (LAFDQLRDVI…QQKQIFRNHM (150 aa)) adopt a coiled-coil conformation. The interval 138–185 (EDILNGKENEIKELQQVISQQKQIFRNHMSDFRIQKQQESYMAQVLDQ) is required for interaction with CBX5 and TBPL1. A disordered region spans residues 180-205 (AQVLDQKHKKASGTRQAHSHQHPREK). The span at 186 to 205 (KHKKASGTRQAHSHQHPREK) shows a compositional bias: basic residues.

Belongs to the SPATA24 family. Homodimer. Interacts with CBX3, CBX5, GMNN, GTF2B, TBPL1 and the polycomb proteins PHCF2, RNF2 and SCMH1 but not with CBX1 or PCGF2.

It is found in the cytoplasm. The protein resides in the nucleus. The protein localises to the nucleolus. It localises to the nucleoplasm. Binds DNA with high affinity but does not bind to TATA boxes. Synergises with GMNN and TBP in activation of TATA box-containing promoters and with GMNN and TBPL1 in activation of the NF1 TATA-less promoter. May play a role in cytoplasm movement and removal during spermiogenesis. This Macaca fascicularis (Crab-eating macaque) protein is Spermatogenesis-associated protein 24 (SPATA24).